Reading from the N-terminus, the 678-residue chain is MKLQKLRNIGIIAHVDAGKTTLTERLLHFTGALHSMGEVHHGGTVTDHMVQERQRGITIASAAVTVGWRDHRINIIDTPGHIDFNIEVNRSLRVLDGAVVVFDSVAGVEPQSETNWRLADQYGVPRICLVNKMDRIGADYLRVVAMIRERLGAQPLVVHLPVFVEETYVGLIDLTTMSLHRWNADDGWKYSSEEITPEYQEQAAQYRAQLEETLVELDDELLEGWFNGATLQADDLKRLIRQGVVSGAFVPVLCASAFKNKGVQMVLDAVVDYLPSPQEVKGMETVDGAQIVDADVDGAFAALAFKVVNDKHGALTYVRVYRGTLQSGSRVLNTNVGQYERIGRIYEMHADRKVARDRIGAGDIVALVGMKHTQTGDTLCAPEAPLVLERINAPEPVMDIVIEPKSRQDQDRLGEALRAIVGEDPSLRLSTGAAGETLVSGMGELHLEIVVDRLQTDFDIAVTVGRPQVAYRETITQSAAVDYVYKKQKGGPGQFAEVRMRFEPIAGDGIEFESQIVGAAIPREYIPAVEDGVRQAARSGVLGGYPCGGFKAVLLDGAYHAQDSSQLAFSVAGREAFKEAMAQATPRLLEPVMAVEIVTPRDHVGDCIGDLMRRRGSILNQLDRGDACVINAEAPLAEMFGYIGDLRTMTAGRASFSMTFSHYAETPQGVADAVLNAD.

A tr-type G domain is found at 4-278 (QKLRNIGIIA…AVVDYLPSPQ (275 aa)). Residues 13-20 (AHVDAGKT), 77-81 (DTPGH), and 131-134 (NKMD) each bind GTP.

This sequence belongs to the TRAFAC class translation factor GTPase superfamily. Classic translation factor GTPase family. EF-G/EF-2 subfamily.

It is found in the cytoplasm. Functionally, catalyzes the GTP-dependent ribosomal translocation step during translation elongation. During this step, the ribosome changes from the pre-translocational (PRE) to the post-translocational (POST) state as the newly formed A-site-bound peptidyl-tRNA and P-site-bound deacylated tRNA move to the P and E sites, respectively. Catalyzes the coordinated movement of the two tRNA molecules, the mRNA and conformational changes in the ribosome. This Hahella chejuensis (strain KCTC 2396) protein is Elongation factor G 2.